A 737-amino-acid polypeptide reads, in one-letter code: Translation initiation factor IF-2 (737 aa).

The span at 69 to 80 (EKKEEKPIRKIM) shows a compositional bias: basic and acidic residues. The interval 69–130 (EKKEEKPIRK…HKNKGKKKKG (62 aa)) is disordered. 2 stretches are compositionally biased toward basic residues: residues 95-108 (NNKK…KNKK) and 121-130 (HKNKGKKKKG). One can recognise a tr-type G domain in the interval 237 to 404 (ERPPVITIMG…TILITAEILE (168 aa)). Positions 246 to 253 (GHVDHGKT) are G1. 246-253 (GHVDHGKT) contacts GTP. Residues 271-275 (GITQK) are G2. The tract at residues 292-295 (DTPG) is G3. Residues 292-296 (DTPGH) and 346-349 (NKID) each bind GTP. Residues 346–349 (NKID) are G4. The interval 382-384 (SAK) is G5.

The protein belongs to the TRAFAC class translation factor GTPase superfamily. Classic translation factor GTPase family. IF-2 subfamily.

The protein resides in the cytoplasm. In terms of biological role, one of the essential components for the initiation of protein synthesis. Protects formylmethionyl-tRNA from spontaneous hydrolysis and promotes its binding to the 30S ribosomal subunits. Also involved in the hydrolysis of GTP during the formation of the 70S ribosomal complex. The polypeptide is Translation initiation factor IF-2 (Fusobacterium nucleatum subsp. nucleatum (strain ATCC 25586 / DSM 15643 / BCRC 10681 / CIP 101130 / JCM 8532 / KCTC 2640 / LMG 13131 / VPI 4355)).